The primary structure comprises 323 residues: Elongation factor P--(R)-beta-lysine ligase (323 aa).

74–76 (SPE) lines the substrate pocket. Residues 98–100 (RNE) and Asn107 contribute to the ATP site. Tyr116 provides a ligand contact to substrate. ATP is bound at residue 242–243 (EL). Glu249 provides a ligand contact to substrate. Gly298 lines the ATP pocket.

This sequence belongs to the class-II aminoacyl-tRNA synthetase family. EpmA subfamily. Homodimer.

It carries out the reaction D-beta-lysine + L-lysyl-[protein] + ATP = N(6)-((3R)-3,6-diaminohexanoyl)-L-lysyl-[protein] + AMP + diphosphate + H(+). With EpmB is involved in the beta-lysylation step of the post-translational modification of translation elongation factor P (EF-P). Catalyzes the ATP-dependent activation of (R)-beta-lysine produced by EpmB, forming a lysyl-adenylate, from which the beta-lysyl moiety is then transferred to the epsilon-amino group of a conserved specific lysine residue in EF-P. The chain is Elongation factor P--(R)-beta-lysine ligase from Vibrio atlanticus (strain LGP32) (Vibrio splendidus (strain Mel32)).